Consider the following 268-residue polypeptide: Ribosomal RNA small subunit methyltransferase A (268 aa).

Residues Asn16, Leu18, Gly43, Glu64, Asp89, and Asn110 each contribute to the S-adenosyl-L-methionine site.

It belongs to the class I-like SAM-binding methyltransferase superfamily. rRNA adenine N(6)-methyltransferase family. RsmA subfamily.

The protein resides in the cytoplasm. The catalysed reaction is adenosine(1518)/adenosine(1519) in 16S rRNA + 4 S-adenosyl-L-methionine = N(6)-dimethyladenosine(1518)/N(6)-dimethyladenosine(1519) in 16S rRNA + 4 S-adenosyl-L-homocysteine + 4 H(+). Its function is as follows. Specifically dimethylates two adjacent adenosines (A1518 and A1519) in the loop of a conserved hairpin near the 3'-end of 16S rRNA in the 30S particle. May play a critical role in biogenesis of 30S subunits. The sequence is that of Ribosomal RNA small subunit methyltransferase A from Pseudomonas savastanoi pv. phaseolicola (strain 1448A / Race 6) (Pseudomonas syringae pv. phaseolicola (strain 1448A / Race 6)).